The sequence spans 584 residues: A-type ATP synthase subunit A (584 aa).

ATP is bound at residue 234–241; that stretch reads GPFGSGKT.

The protein belongs to the ATPase alpha/beta chains family. As to quaternary structure, has multiple subunits with at least A(3), B(3), C, D, E, F, H, I and proteolipid K(x).

The protein localises to the cell membrane. The catalysed reaction is ATP + H2O + 4 H(+)(in) = ADP + phosphate + 5 H(+)(out). Functionally, component of the A-type ATP synthase that produces ATP from ADP in the presence of a proton gradient across the membrane. The A chain is the catalytic subunit. In Methanoculleus marisnigri (strain ATCC 35101 / DSM 1498 / JR1), this protein is A-type ATP synthase subunit A.